The sequence spans 62 residues: MPKIIEAIYENGVFKPLQKVDLKEGERIKLRIEEGILDVIKKYQGKFKLTEKDIEKFLEERR.

This sequence belongs to the UPF0165 family.

In terms of biological role, possibly the antitoxin component of a type II toxin-antitoxin (TA) system. The sequence is that of Putative antitoxin AF_1095 from Archaeoglobus fulgidus (strain ATCC 49558 / DSM 4304 / JCM 9628 / NBRC 100126 / VC-16).